Reading from the N-terminus, the 193-residue chain is Protein hunchback (193 aa).

Residues 18–31 (HLHHHHAHHSHHRH) are compositionally biased toward basic residues. Disordered regions lie at residues 18–57 (HLHH…SNTN) and 153–193 (LTPP…KYMA). Over residues 34–44 (NSNSNASSPHQ) the composition is skewed to low complexity. Over residues 174–193 (EPEKEHDLMSNSSEDMKYMA) the composition is skewed to basic and acidic residues.

It belongs to the hunchback C2H2-type zinc-finger protein family.

The protein localises to the nucleus. In terms of biological role, gap class segmentation protein that controls development of head structures. In Drosophila petalopeza (Fruit fly), this protein is Protein hunchback (hb).